A 604-amino-acid polypeptide reads, in one-letter code: Elongation factor 4 (604 aa).

The tr-type G domain occupies 2-184; the sequence is DHIRNFSIIA…AVITRMPAPR (183 aa). Residues 14–19 and 131–134 each bind GTP; these read DHGKST and NKMD.

This sequence belongs to the TRAFAC class translation factor GTPase superfamily. Classic translation factor GTPase family. LepA subfamily.

Its subcellular location is the cell inner membrane. The catalysed reaction is GTP + H2O = GDP + phosphate + H(+). In terms of biological role, required for accurate and efficient protein synthesis under certain stress conditions. May act as a fidelity factor of the translation reaction, by catalyzing a one-codon backward translocation of tRNAs on improperly translocated ribosomes. Back-translocation proceeds from a post-translocation (POST) complex to a pre-translocation (PRE) complex, thus giving elongation factor G a second chance to translocate the tRNAs correctly. Binds to ribosomes in a GTP-dependent manner. This chain is Elongation factor 4, found in Methylibium petroleiphilum (strain ATCC BAA-1232 / LMG 22953 / PM1).